We begin with the raw amino-acid sequence, 561 residues long: Arginine--tRNA ligase (561 aa).

The 'HIGH' region motif lies at 129 to 139 (ANPTGPLHIGH).

Belongs to the class-I aminoacyl-tRNA synthetase family. In terms of assembly, monomer.

Its subcellular location is the cytoplasm. It carries out the reaction tRNA(Arg) + L-arginine + ATP = L-arginyl-tRNA(Arg) + AMP + diphosphate. The chain is Arginine--tRNA ligase from Geotalea daltonii (strain DSM 22248 / JCM 15807 / FRC-32) (Geobacter daltonii).